The following is a 380-amino-acid chain: Guanine nucleotide-binding protein subunit beta (380 aa).

7 WD repeats span residues 64-94, 106-136, 155-186, 203-234, 247-277, 296-326, and 342-372; these read GHSGKVYSLDWTPEKNWIVSASQDGRLIVWN, LHCPWVMTCAFAPNGQSVACGGLDSACSIFN, GHKGYVSSCQYVPDQETRLITSSGDQTCVLWD, GHTADVLSLSINSSNSNMFVSGSCDATVRLWD, GHEGDINSVKFFPDGQRFGTGSDDGTCRLFD, NELPTVTSIAFSISGRLLFAGYSNGDCYVWD, and SHEGRISCLGLSSDGSALCTGSWDKNLKIWA.

This sequence belongs to the WD repeat G protein beta family. As to quaternary structure, g proteins are composed of 3 units, alpha, beta and gamma. Interacts with the gamma subunits RGG1 and RGG2.

The protein localises to the cell membrane. Functionally, guanine nucleotide-binding proteins (G proteins) are involved as modulators or transducers in various transmembrane signaling systems. The beta and gamma chains are required for the GTPase activity, for replacement of GDP by GTP, and for G protein-effector interaction. This Oryza sativa subsp. japonica (Rice) protein is Guanine nucleotide-binding protein subunit beta.